Consider the following 82-residue polypeptide: Cytochrome b559 subunit alpha (82 aa).

Residues 21-35 form a helical membrane-spanning segment; sequence VIHSITVPALFIAGW. His23 contacts heme.

This sequence belongs to the PsbE/PsbF family. In terms of assembly, heterodimer of an alpha subunit and a beta subunit. PSII is composed of 1 copy each of membrane proteins PsbA, PsbB, PsbC, PsbD, PsbE, PsbF, PsbH, PsbI, PsbJ, PsbK, PsbL, PsbM, PsbT, PsbX, PsbY, PsbZ, Psb30/Ycf12, at least 3 peripheral proteins of the oxygen-evolving complex and a large number of cofactors. It forms dimeric complexes. Requires heme b as cofactor.

It is found in the plastid. It localises to the chloroplast thylakoid membrane. Its function is as follows. This b-type cytochrome is tightly associated with the reaction center of photosystem II (PSII). PSII is a light-driven water:plastoquinone oxidoreductase that uses light energy to abstract electrons from H(2)O, generating O(2) and a proton gradient subsequently used for ATP formation. It consists of a core antenna complex that captures photons, and an electron transfer chain that converts photonic excitation into a charge separation. The polypeptide is Cytochrome b559 subunit alpha (Chlamydomonas reinhardtii (Chlamydomonas smithii)).